Reading from the N-terminus, the 509-residue chain is Putative 6-phosphofructo-2-kinase/fructose-2,6-bisphosphatase YLR345W (509 aa).

Serine 6 bears the Phosphoserine mark. Residues 6 to 291 form a 6-phosphofructo-2-kinase region; the sequence is SDDEELLNGL…FFLMNLRQKK (286 aa). 90–98 lines the ATP pocket; that stretch reads GLPATSKTL. Catalysis depends on aspartate 173, which acts as the Proton donor/acceptor. 212-217 is an ATP binding site; the sequence is NIALAL. Arginine 237 contacts beta-D-fructose 6-phosphate. Residues 292-466 form a fructose-2,6-bisphosphatase region; sequence GCVYFARCGT…IAHESTLRVL (175 aa). Arginine 298 is a binding site for beta-D-fructose 2,6-bisphosphate. 415-418 contributes to the ATP binding site; that stretch reads YKES. Beta-D-fructose 2,6-bisphosphate contacts are provided by tyrosine 433 and arginine 464. 460 to 464 serves as a coordination point for ATP; that stretch reads ESTLR.

This sequence in the C-terminal section; belongs to the phosphoglycerate mutase family. As to quaternary structure, homodimer.

Its subcellular location is the cytoplasm. It catalyses the reaction beta-D-fructose 2,6-bisphosphate + H2O = beta-D-fructose 6-phosphate + phosphate. The catalysed reaction is beta-D-fructose 6-phosphate + ATP = beta-D-fructose 2,6-bisphosphate + ADP + H(+). Its function is as follows. Synthesis and degradation of fructose 2,6-bisphosphate. In Saccharomyces cerevisiae (strain ATCC 204508 / S288c) (Baker's yeast), this protein is Putative 6-phosphofructo-2-kinase/fructose-2,6-bisphosphatase YLR345W.